The primary structure comprises 204 residues: Putative glutathione S-transferase alpha-3 (204 aa).

Position 2 is an N-acetylthreonine (T2). In terms of domain architecture, GST N-terminal spans 2-79 (TKPQLSYFKV…YIASQHDFVG (78 aa)). Glutathione is bound by residues Y8, 49-50 (QL), and 63-64 (QS). The GST C-terminal domain occupies 81–202 (TPEEKALVDE…YLKNRPITER (122 aa)).

Belongs to the GST superfamily. Alpha family.

It carries out the reaction RX + glutathione = an S-substituted glutathione + a halide anion + H(+). Its function is as follows. Conjugation of reduced glutathione to a wide number of exogenous and endogenous hydrophobic electrophiles. The protein is Putative glutathione S-transferase alpha-3 (gsta3) of Dictyostelium discoideum (Social amoeba).